A 427-amino-acid polypeptide reads, in one-letter code: Probable WRKY transcription factor 35 (427 aa).

Disordered stretches follow at residues 1 to 45 (MDNF…DLHV) and 266 to 336 (YTSE…HPPF). Over residues 23–40 (SPGPPEGPSPSSMSPPPT) the composition is skewed to pro residues. A DNA-binding region (WRKY) is located at residues 209–275 (SGEVVPSDLW…YTSEHNHPWP (67 aa)). Over residues 284-310 (STRSSSSSSLNPSSKSSTAAATTSPSS) the composition is skewed to low complexity. Residues 311-333 (RVFQNNSSKDEPNNSNLPSSSTH) are compositionally biased toward polar residues.

Belongs to the WRKY group II-e family.

The protein resides in the nucleus. Its function is as follows. Transcription factor. Interacts specifically with the W box (5'-(T)TGAC[CT]-3'), a frequently occurring elicitor-responsive cis-acting element. This chain is Probable WRKY transcription factor 35 (WRKY35), found in Arabidopsis thaliana (Mouse-ear cress).